Reading from the N-terminus, the 146-residue chain is Hemoglobin subunit beta (146 aa).

The residue at position 1 (Val-1) is an N-acetylvaline. One can recognise a Globin domain in the interval 2 to 146 (HLTAAEKSAI…VANALAHKYH (145 aa)). Position 63 (His-63) interacts with heme b. Lys-82 is modified (N6-acetyllysine). His-92 is a binding site for heme b. Position 93 is an S-nitrosocysteine (Cys-93). Lys-144 carries the post-translational modification N6-acetyllysine.

This sequence belongs to the globin family. In terms of assembly, heterotetramer of two alpha chains and two beta chains. As to expression, red blood cells.

Its function is as follows. Involved in oxygen transport from the lung to the various peripheral tissues. In Cavia porcellus (Guinea pig), this protein is Hemoglobin subunit beta (HBB).